The following is a 482-amino-acid chain: MEKKMKEEEEEPLSPMARAFQEPSIDCGIVIKFGCKTKINPDVIVDSLKLNVFKHPRFCSLLDDDGTKWLRTDVVNVEEHVFVPDIDPKLTEEDVEWFVEDYISSITMIPLDRTKPLWEVHILNAKTSDAEAICVIRCHHALGDGVSILSLILASTRKTSEPEAFSTLPVPKCRESYNHRRGFSFFRLVLVVCSTVRLIWNTLVDSFLCMATIFFLKDTDTPLKGKPGAIKKFSHRIVSLDDIKLIKNAMEMTINDVLLGVTEAALTRYLHQSYDKTNEEAGTSLTPNRQDLLDRIRLRSLIVVNLRPTGSQSIADMMAKGSKCRWGNYISVILFPFTIALQSDPLVYLSNVKSMIDRKKNSLITYIIYTFSEFVIKAFGINVAVAFQRKIMLNTTMCISNLPGPTEEVSFHGHPIAYFAPSIYGLPQALTIHYLSYANKMIISVAVDPMIIDAHKLCDELEESLKNMKLAILEKGLPNHVN.

Topologically, residues 1-195 (MEKKMKEEEE…FRLVLVVCST (195 aa)) are cytoplasmic. His140 serves as the catalytic Proton acceptor. A helical transmembrane segment spans residues 196 to 216 (VRLIWNTLVDSFLCMATIFFL). Topologically, residues 217–328 (KDTDTPLKGK…AKGSKCRWGN (112 aa)) are lumenal. Residues 329-349 (YISVILFPFTIALQSDPLVYL) traverse the membrane as a helical segment. At 350–366 (SNVKSMIDRKKNSLITY) the chain is on the cytoplasmic side. The helical transmembrane segment at 367-387 (IIYTFSEFVIKAFGINVAVAF) threads the bilayer. Topologically, residues 388–482 (QRKIMLNTTM…LEKGLPNHVN (95 aa)) are lumenal. An N-linked (GlcNAc...) asparagine glycan is attached at Asn394.

This sequence in the N-terminal section; belongs to the long-chain O-acyltransferase family. In terms of tissue distribution, mostly expressed in stems and siliques.

The protein localises to the cell membrane. It is found in the endoplasmic reticulum membrane. It carries out the reaction an acyl-CoA + a 1,2-diacyl-sn-glycerol = a triacyl-sn-glycerol + CoA. The enzyme catalyses a long chain fatty alcohol + a fatty acyl-CoA = a wax ester + CoA. It participates in glycerolipid metabolism; triacylglycerol biosynthesis. The protein operates within lipid metabolism. Bifunctional wax ester synthase/diacylglycerol acyltransferase. Involved in cuticular wax biosynthesis. In Arabidopsis thaliana (Mouse-ear cress), this protein is Wax ester synthase/diacylglycerol acyltransferase 9.